We begin with the raw amino-acid sequence, 342 residues long: BAG family molecular chaperone regulator 1 (342 aa).

The tract at residues methionine 1 to glutamate 41 is disordered. The segment covering lysine 8–methionine 17 has biased composition (polar residues). Positions threonine 18–glutamate 34 are enriched in gly residues. The 77-residue stretch at proline 65–glutamine 141 folds into the Ubiquitin-like domain. The 79-residue stretch at alanine 160–lysine 238 folds into the BAG domain. At serine 298 the chain carries Phosphoserine.

As to quaternary structure, binds to the ATPase domain of HSP70/HSC70 chaperones.

Its function is as follows. Co-chaperone that regulates diverse cellular pathways, such as programmed cell death and stress responses. The chain is BAG family molecular chaperone regulator 1 (BAG1) from Arabidopsis thaliana (Mouse-ear cress).